Consider the following 210-residue polypeptide: Uracil phosphoribosyltransferase (210 aa).

Residues arginine 77, arginine 102, and 129–137 each bind 5-phospho-alpha-D-ribose 1-diphosphate; that span reads DPMLATGAS. Uracil-binding positions include isoleucine 195 and 200–202; that span reads GDA. Position 201 (aspartate 201) interacts with 5-phospho-alpha-D-ribose 1-diphosphate.

It belongs to the UPRTase family. Mg(2+) serves as cofactor.

The catalysed reaction is UMP + diphosphate = 5-phospho-alpha-D-ribose 1-diphosphate + uracil. It participates in pyrimidine metabolism; UMP biosynthesis via salvage pathway; UMP from uracil: step 1/1. Its activity is regulated as follows. Allosterically activated by GTP. Functionally, catalyzes the conversion of uracil and 5-phospho-alpha-D-ribose 1-diphosphate (PRPP) to UMP and diphosphate. This chain is Uracil phosphoribosyltransferase, found in Mycoplasmoides gallisepticum (strain R(low / passage 15 / clone 2)) (Mycoplasma gallisepticum).